Reading from the N-terminus, the 501-residue chain is Pentatricopeptide repeat-containing protein At4g16470 (501 aa).

8 PPR repeats span residues 107-141, 142-172, 173-207, 208-242, 243-273, 274-308, 309-344, and 345-379; these read EPET…GFAL, NEYL…LKIR, DLIP…RIVP, DQYT…CIKS, NIIV…LSTR, NVIT…GCRP, NPVT…GIEP, and EGQH…EHPP. Positions 380 to 455 are type E motif; sequence VWGSLLGACR…DPGYSQIELQ (76 aa). The tract at residues 456-486 is type E(+) motif; that stretch reads GEVHRFMKDDTSHRLSEKIYKKVHEMTSFFM.

The protein belongs to the PPR family. PCMP-E subfamily.

In Arabidopsis thaliana (Mouse-ear cress), this protein is Pentatricopeptide repeat-containing protein At4g16470 (PCMP-E12).